Here is a 1016-residue protein sequence, read N- to C-terminus: Probable outer membrane protein PmpH (1016 aa).

The first 24 residues, Met-1 to Ala-24, serve as a signal peptide directing secretion. Residues Gly-697–Phe-1016 form the Autotransporter domain.

It belongs to the PMP outer membrane protein family.

It localises to the secreted. The protein resides in the cell wall. The protein localises to the cell outer membrane. This is Probable outer membrane protein PmpH (pmpH) from Chlamydia trachomatis serovar D (strain ATCC VR-885 / DSM 19411 / UW-3/Cx).